The chain runs to 414 residues: Probable isoprenylcysteine alpha-carbonyl methylesterase ICME (414 aa).

Positions Met1 to Thr54 are disordered. Transmembrane regions (helical) follow at residues Leu90–Tyr110 and Val145–Leu165. Substrate-binding positions include Gly151–Ala153 and Gln222–Ala224. Catalysis depends on residues Ser223, Asp323, and His355.

The protein belongs to the AB hydrolase superfamily. Isoprenylcysteine methylesterase family.

It is found in the endoplasmic reticulum membrane. Its subcellular location is the golgi apparatus membrane. The enzyme catalyses [protein]-C-terminal S-[(2E,6E)-farnesyl]-L-cysteine methyl ester + H2O = [protein]-C-terminal S-[(2E,6E)-farnesyl]-L-cysteine + methanol + H(+). Catalyzes the demethylation of isoprenylcysteine methylesters. The polypeptide is Probable isoprenylcysteine alpha-carbonyl methylesterase ICME (IMCE) (Oryza sativa subsp. japonica (Rice)).